A 196-amino-acid polypeptide reads, in one-letter code: Putative NADH dehydrogenase/NAD(P)H nitroreductase Smal_0358 (196 aa).

Belongs to the nitroreductase family. HadB/RutE subfamily. Requires FMN as cofactor.

This chain is Putative NADH dehydrogenase/NAD(P)H nitroreductase Smal_0358, found in Stenotrophomonas maltophilia (strain R551-3).